The primary structure comprises 189 residues: MTEYKLVVVGARGVGKSALTIQLIQNHFVDEYDPTIEDSYRKQVVIDGETCLLDILDTAGQEEYSAMRDQYMRTGEGFLCVFAINNTKSFEDIHQYREQIKRVKDSDDVPMVLVGNKCDLAARTVESRQAQDLARSYGIPYIETSAKTRQGVEDAFYTLVREIRQHKLRKLNPPDESGPGCMSCKCVLS.

10–17 (GARGVGKS) is a binding site for GTP. The Effector region motif lies at 32–40 (YDPTIEDSY). Residues 57–61 (DTAGQ) and 116–119 (NKCD) each bind GTP. Residues Cys181 and Cys184 are each lipidated (S-palmitoyl cysteine; by host). The residue at position 186 (Cys186) is a Cysteine methyl ester; by host. Cys186 carries S-farnesyl cysteine; by host lipidation. Positions 187 to 189 (VLS) are cleaved as a propeptide — removed in mature form.

It belongs to the small GTPase superfamily. Ras family.

It localises to the host cell membrane. The catalysed reaction is GTP + H2O = GDP + phosphate + H(+). Its activity is regulated as follows. Alternates between an inactive form bound to GDP and an active form bound to GTP. Activated by a guanine nucleotide-exchange factor (GEF) and inactivated by a GTPase-activating protein (GAP). This is GTPase HRas (H-RAS) from Mus musculus (Mouse).